We begin with the raw amino-acid sequence, 217 residues long: Oxygen-insensitive NAD(P)H nitroreductase (217 aa).

Arg10–Lys14 contributes to the FMN binding site. Residues Lys14, Thr41, Asn71, Lys74, and Arg107 each contribute to the NAD(+) site. An FMN-binding site is contributed by Asn71. Residues Glu165 to Gly166 and Lys205 to Arg207 contribute to the FMN site.

Belongs to the nitroreductase family. As to quaternary structure, homodimer. The cofactor is FMN.

Functionally, reduction of a variety of nitroaromatic compounds using NADH (and to lesser extent NADPH) as source of reducing equivalents; two electrons are transferred. Capable of reducing nitrofurazone. This is Oxygen-insensitive NAD(P)H nitroreductase from Salmonella typhimurium (strain LT2 / SGSC1412 / ATCC 700720).